The following is a 371-amino-acid chain: tRNA-specific 2-thiouridylase MnmA (371 aa).

Residues 8 to 15 (GMSGGVDS) and methionine 34 each bind ATP. Residues 94 to 96 (NPD) are interaction with target base in tRNA. The Nucleophile role is filled by cysteine 99. A disulfide bond links cysteine 99 and cysteine 195. Glycine 123 lines the ATP pocket. An interaction with tRNA region spans residues 145 to 147 (KDQ). Residue cysteine 195 is the Cysteine persulfide intermediate of the active site. An interaction with tRNA region spans residues 309–310 (RY).

The protein belongs to the MnmA/TRMU family.

It is found in the cytoplasm. It catalyses the reaction S-sulfanyl-L-cysteinyl-[protein] + uridine(34) in tRNA + AH2 + ATP = 2-thiouridine(34) in tRNA + L-cysteinyl-[protein] + A + AMP + diphosphate + H(+). Its function is as follows. Catalyzes the 2-thiolation of uridine at the wobble position (U34) of tRNA, leading to the formation of s(2)U34. The chain is tRNA-specific 2-thiouridylase MnmA from Methylococcus capsulatus (strain ATCC 33009 / NCIMB 11132 / Bath).